We begin with the raw amino-acid sequence, 192 residues long: Ion-translocating oxidoreductase complex subunit B (192 aa).

The hydrophobic stretch occupies residues 1 to 26 (MNTIWIAVGALALLGLVFGAILGYAS). The 60-residue stretch at 32–91 (EDDPVVEKIDAILPQSQCGQCGYPGCRPYAEAVGLQGEKINRCAPGGEAVMLKIAELLNV) folds into the 4Fe-4S domain. Residues cysteine 49, cysteine 52, cysteine 57, cysteine 74, cysteine 117, cysteine 120, cysteine 123, cysteine 127, cysteine 147, cysteine 150, cysteine 153, and cysteine 157 each contribute to the [4Fe-4S] cluster site. 2 4Fe-4S ferredoxin-type domains span residues 108 to 137 (MLAVIDENNCIGCTKCIQACPVDAIVGATR) and 138 to 167 (AMHTVMSDLCTGCNLCVDPCPTHCIELRPV).

This sequence belongs to the 4Fe4S bacterial-type ferredoxin family. RnfB subfamily. As to quaternary structure, the complex is composed of six subunits: RsxA, RsxB, RsxC, RsxD, RsxE and RsxG. [4Fe-4S] cluster serves as cofactor.

It is found in the cell inner membrane. Functionally, part of a membrane-bound complex that couples electron transfer with translocation of ions across the membrane. Required to maintain the reduced state of SoxR. The chain is Ion-translocating oxidoreductase complex subunit B from Salmonella newport (strain SL254).